The sequence spans 233 residues: Probable septum site-determining protein MinC (233 aa).

Residues 98–123 (LTEGKEKAPRPAPSEPTPPPPPVANQ) are disordered. A compositionally biased stretch (pro residues) spans 107 to 120 (RPAPSEPTPPPPPV).

It belongs to the MinC family. As to quaternary structure, interacts with MinD and FtsZ.

Functionally, cell division inhibitor that blocks the formation of polar Z ring septums. Rapidly oscillates between the poles of the cell to destabilize FtsZ filaments that have formed before they mature into polar Z rings. Prevents FtsZ polymerization. In Klebsiella pneumoniae (strain 342), this protein is Probable septum site-determining protein MinC.